Reading from the N-terminus, the 230-residue chain is Nicotinamide riboside kinase 2 (230 aa).

9-17 contributes to the ATP binding site; it reads GMTNGGKTT. Residues threonine 16 and aspartate 35 each contribute to the Mg(2+) site. Aspartate 35 serves as the catalytic Proton acceptor. Substrate contacts are provided by residues 35–38 and 54–55; these read DDFF and WD. Arginine 130 contacts ATP. Substrate is bound by residues arginine 131 and 136-137; that span reads YT. ATP-binding positions include 134 to 136 and 174 to 176; these read RNY and KSR. The interval 191 to 230 is disordered; the sequence is LLNRSQESAPSPARPARTQGPGRGCGHRTARPAASQQDSM.

Belongs to the uridine kinase family. NRK subfamily. In terms of assembly, monomer. Interacts with ITGB1 alone or when associated with alpha-7, but not with alpha-5. As to expression, predominantly expressed in skeletal muscle and, at a much lower level, in the heart (at protein level). No expression in brain, kidney, liver, lung, pancreas nor placenta.

The enzyme catalyses beta-nicotinamide D-riboside + ATP = beta-nicotinamide D-ribonucleotide + ADP + H(+). It carries out the reaction beta-D-ribosylnicotinate + ATP = nicotinate beta-D-ribonucleotide + ADP + H(+). Its pathway is cofactor biosynthesis; NAD(+) biosynthesis. Its function is as follows. Catalyzes the phosphorylation of nicotinamide riboside (NR) and nicotinic acid riboside (NaR) to form nicotinamide mononucleotide (NMN) and nicotinic acid mononucleotide (NaMN). Reduces laminin matrix deposition and cell adhesion to laminin, but not to fibronectin. Involved in the regulation of PXN at the protein level and of PXN tyrosine phosphorylation. May play a role in the regulation of terminal myogenesis. The protein is Nicotinamide riboside kinase 2 (NMRK2) of Homo sapiens (Human).